The primary structure comprises 171 residues: Shikimate kinase (171 aa).

ATP is bound at residue 14–19 (GAGKST). S18 serves as a coordination point for Mg(2+). D36, R60, and G82 together coordinate substrate. Position 120 (R120) interacts with ATP. R139 serves as a coordination point for substrate. Q156 lines the ATP pocket.

Belongs to the shikimate kinase family. As to quaternary structure, monomer. It depends on Mg(2+) as a cofactor.

The protein localises to the cytoplasm. The catalysed reaction is shikimate + ATP = 3-phosphoshikimate + ADP + H(+). It functions in the pathway metabolic intermediate biosynthesis; chorismate biosynthesis; chorismate from D-erythrose 4-phosphate and phosphoenolpyruvate: step 5/7. Functionally, catalyzes the specific phosphorylation of the 3-hydroxyl group of shikimic acid using ATP as a cosubstrate. The sequence is that of Shikimate kinase from Shewanella amazonensis (strain ATCC BAA-1098 / SB2B).